A 156-amino-acid polypeptide reads, in one-letter code: SsrA-binding protein (156 aa).

It belongs to the SmpB family.

The protein localises to the cytoplasm. Functionally, required for rescue of stalled ribosomes mediated by trans-translation. Binds to transfer-messenger RNA (tmRNA), required for stable association of tmRNA with ribosomes. tmRNA and SmpB together mimic tRNA shape, replacing the anticodon stem-loop with SmpB. tmRNA is encoded by the ssrA gene; the 2 termini fold to resemble tRNA(Ala) and it encodes a 'tag peptide', a short internal open reading frame. During trans-translation Ala-aminoacylated tmRNA acts like a tRNA, entering the A-site of stalled ribosomes, displacing the stalled mRNA. The ribosome then switches to translate the ORF on the tmRNA; the nascent peptide is terminated with the 'tag peptide' encoded by the tmRNA and targeted for degradation. The ribosome is freed to recommence translation, which seems to be the essential function of trans-translation. This Shouchella clausii (strain KSM-K16) (Alkalihalobacillus clausii) protein is SsrA-binding protein.